The primary structure comprises 1325 residues: Bile salt export pump (1325 aa).

The Cytoplasmic portion of the chain corresponds to 1-62 (MSDAVILRSV…FSSTTDIWLM (62 aa)). Residues 62 to 385 (MFVGSLCAFL…ASSCLEAFAT (324 aa)) enclose the ABC transmembrane type-1 1 domain. The helical transmembrane segment at 63 to 83 (FVGSLCAFLHGLSHPGVLLIF) threads the bilayer. At 84 to 147 (GTMTDVFIAY…MIKFASYYAG (64 aa)) the chain is on the extracellular side. 4 N-linked (GlcNAc...) asparagine glycosylation sites follow: Asn109, Asn116, Asn122, and Asn125. The helical transmembrane segment at 148–168 (IALLVLITGYIQICFWVIAAA) threads the bilayer. Topologically, residues 169 to 240 (RQIQKMRKIS…FLLGFYQGWK (72 aa)) are cytoplasmic. A helical transmembrane segment spans residues 241-261 (LTLVIISVSPLIGIGAAIIGL). Residues 262-319 (SVSKFTDYELKAYAKAGSVADEVISSMRTVAAFGGEKKEVERYEKNLVFAQRWGIRKG) are Extracellular-facing. A helical transmembrane segment spans residues 320–340 (IVMGFFTGFMWCLIFLCYALA). Residues 341-353 (FWYGSKLVLEDGE) lie on the Cytoplasmic side of the membrane. The chain crosses the membrane as a helical span at residues 354 to 374 (YTAGTLVQIFLSILLGALNLG). N-linked (GlcNAc...) asparagine glycans are attached at residues Asn375, Asn424, and Asn440. Over 375–759 (NASSCLEAFA…KFNAPEWPYM (385 aa)) the chain is Extracellular. The region spanning 420-656 (IEFHNVTFHY…KGVYFTLVTL (237 aa)) is the ABC transporter 1 domain. Residue 455 to 462 (GSSGSGKS) coordinates ATP. Asn591 carries an N-linked (GlcNAc...) asparagine glycan. One can recognise an ABC transmembrane type-1 2 domain in the interval 759–1047 (MLFGAVGAAV…ASSYTPSYAK (289 aa)). Residues 760-780 (LFGAVGAAVNGSVTPLYAFLF) form a helical membrane-spanning segment. Topologically, residues 781-798 (SQILGTFSLPDKEEQRSQ) are cytoplasmic. The helical transmembrane segment at 799–819 (INGVCLLFVAVGCVSLCTQFL) threads the bilayer. Over 820-894 (QGYAFAKSGE…NSFTNVTVAM (75 aa)) the chain is Extracellular. A glycan (N-linked (GlcNAc...) asparagine) is linked at Asn889. Residues 895 to 915 (IIAFFFSWKLSLVIMCFFPFL) traverse the membrane as a helical segment. The Cytoplasmic portion of the chain corresponds to 916 to 983 (ALSGALQTRM…PFKTAFRKAN (68 aa)). Residues 984–1004 (VYGFCFGFSQCIVFVANSASY) form a helical membrane-spanning segment. Over 1005-1014 (RYGGYLIPNE) the chain is Extracellular. Residues 1015–1035 (GLHFSYVFRVISSVVLSATAL) traverse the membrane as a helical segment. At 1036–1325 (GRASSYTPSY…KLVTTGAPIS (290 aa)) the chain is on the cytoplasmic side. The ABC transporter 2 domain occupies 1082–1320 (VDFVDCKFTY…KGAYYKLVTT (239 aa)). 1117-1124 (GSSGCGKS) serves as a coordination point for ATP.

This sequence belongs to the ABC transporter superfamily. ABCB family. Multidrug resistance exporter (TC 3.A.1.201) subfamily. In terms of assembly, interacts with HAX1. Interacts with the adapter protein complex 2 (AP-2) throught AP2A2 or AP2A1; this interaction regulates cell membrane expression of ABCB11 through its internalization in a clathrin-dependent manner and its subsequent degradation. In terms of processing, N-glycosylated. Ubiquitinated; short-chain ubiquitination regulates cell-Surface expression of ABCB11. Liver.

The protein resides in the apical cell membrane. The protein localises to the recycling endosome membrane. It localises to the endosome. Its subcellular location is the cell membrane. The enzyme catalyses cholate(in) + ATP + H2O = cholate(out) + ADP + phosphate + H(+). It catalyses the reaction taurocholate(in) + ATP + H2O = taurocholate(out) + ADP + phosphate + H(+). It carries out the reaction glycocholate(in) + ATP + H2O = glycocholate(out) + ADP + phosphate + H(+). The catalysed reaction is glycochenodeoxycholate(in) + ATP + H2O = glycochenodeoxycholate(out) + ADP + phosphate + H(+). The enzyme catalyses taurochenodeoxycholate(in) + ATP + H2O = taurochenodeoxycholate(out) + ADP + phosphate + H(+). It catalyses the reaction glycoursodeoxycholate(in) + ATP + H2O = glycoursodeoxycholate(out) + ADP + phosphate + H(+). It carries out the reaction tauroursodeoxycholate(in) + ATP + H2O = tauroursodeoxycholate(out) + ADP + phosphate + H(+). The catalysed reaction is taurodeoxycholate(in) + ATP + H2O = taurodeoxycholate(out) + ADP + phosphate + H(+). The enzyme catalyses taurolithocholate 3-sulfate(in) + ATP + H2O = taurolithocholate 3-sulfate(out) + ADP + phosphate + H(+). It catalyses the reaction pravastatin(in) + ATP + H2O = pravastatin(out) + ADP + phosphate + H(+). With respect to regulation, the uptake of taurocholate is inhibited by taurolithocholate sulfate with an IC(50) of 9 uM. Pravastatin competitively inhibits the transport of taurocholic acid. Cyclosporin A, glibenclamide, rifampicin and troglitazonestrongly competitively inhibit the transport activity of taurocholate. The canalicular transport activity of taurocholate is strongly dependent on canalicular membrane cholesterol content. The uptake of taurocholate is increased by short- and medium-chain fatty acids. Cholesterol increases transport capacity of taurocholate without affecting the affinity for the substrate. Catalyzes the transport of the major hydrophobic bile salts, such as taurine and glycine-conjugated cholic acid across the canalicular membrane of hepatocytes in an ATP-dependent manner, therefore participates in hepatic bile acid homeostasis and consequently to lipid homeostasis through regulation of biliary lipid secretion in a bile salts dependent manner. Transports taurine-conjugated bile salts more rapidly than glycine-conjugated bile salts. Also transports non-bile acid compounds, such as pravastatin and fexofenadine in an ATP-dependent manner and may be involved in their biliary excretion. The protein is Bile salt export pump of Canis lupus familiaris (Dog).